We begin with the raw amino-acid sequence, 262 residues long: Transmembrane protein 81 (262 aa).

The N-terminal stretch at 1–30 (MKAVATVFICGSLVLITYLPLVVTSPQTLA) is a signal peptide. Residues 31-225 (IPEKLRQAVG…HLPGWRKKVS (195 aa)) lie on the Extracellular side of the membrane. N-linked (GlcNAc...) asparagine glycosylation is present at asparagine 45. An Ig-like domain is found at 83–171 (TNWICGMLHF…VQQLKNLKLV (89 aa)). The cysteines at positions 104 and 160 are disulfide-linked. N-linked (GlcNAc...) asparagine glycosylation occurs at asparagine 211. Residues 226–246 (LALGVGIAAGVVGGVLVNVAL) traverse the membrane as a helical segment. Residues 247–262 (CRVLGGTGGNGNLSSL) are Cytoplasmic-facing.

In terms of assembly, forms a complex with IZUMO1 and SPACA6 on spermatocyte cell membrane required for fertilization.

It is found in the cell membrane. Functionally, essential fertilization factor required for male fertility. Part of a conserved trimeric sperm complex with the essential fertilization factors IZUMO1 and SPACA6 which bridges sperm and oocyte membranes during fertilization by binding to IZUMO1R/JUNO on the oocyte. The chain is Transmembrane protein 81 (Tmem81) from Rattus norvegicus (Rat).